Here is a 37-residue protein sequence, read N- to C-terminus: Large ribosomal subunit protein bL36 (37 aa).

The protein belongs to the bacterial ribosomal protein bL36 family.

This chain is Large ribosomal subunit protein bL36, found in Synechococcus elongatus (strain ATCC 33912 / PCC 7942 / FACHB-805) (Anacystis nidulans R2).